Reading from the N-terminus, the 570-residue chain is Probable D-xylulose kinase A (570 aa).

Residues His-95, Arg-166, Asp-282, and Asn-283 each contribute to the substrate site. ATP is bound by residues Trp-364, 469 to 470, and Asn-473; that span reads GG.

This sequence belongs to the FGGY kinase family.

The protein localises to the cytoplasm. The catalysed reaction is D-xylulose + ATP = D-xylulose 5-phosphate + ADP + H(+). Functionally, highly specific D-xylulose kinase which participates in the catabolism of xylose. Xylose is a major component of hemicelluloses such as xylan. Most fungi utilize D-xylose via three enzymatic reactions, xylose reductase (XR), xylitol dehydrogenase (XDH), and xylulokinase, to form xylulose 5-phosphate, which enters pentose phosphate pathway. The sequence is that of Probable D-xylulose kinase A (xkiA) from Aspergillus niger (strain ATCC MYA-4892 / CBS 513.88 / FGSC A1513).